Reading from the N-terminus, the 2183-residue chain is Genome polyprotein (2183 aa).

Residue glycine 2 is the site of N-myristoyl glycine; by host attachment. Over 2–1493 the chain is Cytoplasmic; sequence GAQVSTQKTG…HVSRAFICLQ (1492 aa). Residues 566–582 form an amphipathic alpha-helix region; that stretch reads FYQGPTEESVERAMGRV. Residues histidine 870 and aspartate 888 each act as for protease 2A activity in the active site. Positions 905 and 907 each coordinate Zn(2+). Residue cysteine 959 is the For protease 2A activity of the active site. Residues cysteine 965 and histidine 967 each contribute to the Zn(2+) site. Positions 1099–1171 are membrane-binding; it reads NNGWLKKFTE…EQSAPSQSDQ (73 aa). The tract at residues 1099-1237 is oligomerization; that stretch reads NNGWLKKFTE…SPGAGKSVAT (139 aa). The interval 1120–1124 is RNA-binding; sequence AVKIQ. The 157-residue stretch at 1203–1359 folds into the SF3 helicase domain; it reads EKKMSNYIQF…SMYSQNGKIN (157 aa). Positions 1367, 1379, and 1384 each coordinate Zn(2+). A C4-type; degenerate zinc finger spans residues 1367 to 1384; sequence CDEECCPVNFKRCCPLVC. An RNA-binding region spans residues 1411–1418; the sequence is EYNHRHSV. The segment at 1422-1427 is oligomerization; sequence LEALFQ. The stretch at 1494 to 1509 is an intramembrane region; the sequence is ALTTFVSVAGIIYIIY. At 1510–2183 the chain is on the cytoplasmic side; the sequence is KLFAGFQGAY…TLRRKWLDSF (674 aa). Tyrosine 1519 carries the O-(5'-phospho-RNA)-tyrosine modification. Residues 1539–1717 enclose the Peptidase C3 domain; sequence GPAFEFAVAM…FSAGLLKHYF (179 aa). Residues histidine 1578, glutamate 1609, and cysteine 1685 each act as for protease 3C activity in the active site. Residues 1948–2064 form the RdRp catalytic domain; sequence GHLIAFDYSG…SYPWPIDASL (117 aa). Aspartate 1954 and aspartate 2050 together coordinate Mg(2+).

Belongs to the picornaviruses polyprotein family. Interacts with capsid protein VP1 and capsid protein VP3 to form heterotrimeric protomers. In terms of assembly, interacts with capsid protein VP0, and capsid protein VP3 to form heterotrimeric protomers. Five protomers subsequently associate to form pentamers which serve as building blocks for the capsid. Interacts with capsid protein VP2, capsid protein VP3 and capsid protein VP4 following cleavage of capsid protein VP0. Interacts with host CXADR. As to quaternary structure, interacts with capsid protein VP1 and capsid protein VP3 in the mature capsid. Interacts with capsid protein VP0 and capsid protein VP1 to form heterotrimeric protomers. Five protomers subsequently associate to form pentamers which serve as building blocks for the capsid. Interacts with capsid protein VP4 in the mature capsid. Interacts with protein 2C; this interaction may be important for virion morphogenesis. In terms of assembly, interacts with capsid protein VP1 and capsid protein VP3. As to quaternary structure, homodimer. Homohexamer; forms a hexameric ring structure with 6-fold symmetry characteristic of AAA+ ATPases. Interacts (via N-terminus) with host RTN3 (via reticulon domain); this interaction is important for viral replication. Interacts with capsid protein VP3; this interaction may be important for virion morphogenesis. In terms of assembly, interacts with protein 3CD. As to quaternary structure, homodimer. Interacts with host GBF1. Interacts (via GOLD domain) with host ACBD3 (via GOLD domain); this interaction allows the formation of a viral protein 3A/ACBD3 heterotetramer with a 2:2 stoichiometry, which will stimulate the recruitment of host PI4KB in order to synthesize PI4P at the viral RNA replication sites. Interacts with RNA-directed RNA polymerase. In terms of assembly, interacts with protein 3AB and with RNA-directed RNA polymerase. As to quaternary structure, interacts with Viral protein genome-linked and with protein 3CD. Mg(2+) serves as cofactor. Specific enzymatic cleavages in vivo by the viral proteases yield processing intermediates and the mature proteins. In terms of processing, myristoylation is required for the formation of pentamers during virus assembly. Further assembly of 12 pentamers and a molecule of genomic RNA generates the provirion. Post-translationally, during virion maturation, immature virions are rendered infectious following cleavage of VP0 into VP4 and VP2. This maturation seems to be an autocatalytic event triggered by the presence of RNA in the capsid and it is followed by a conformational change infectious virion. Myristoylation is required during RNA encapsidation and formation of the mature virus particle. In terms of processing, VPg is uridylylated by the polymerase into VPg-pUpU. This acts as a nucleotide-peptide primer for the genomic RNA replication.

It localises to the virion. Its subcellular location is the host cytoplasm. The protein localises to the host cytoplasmic vesicle membrane. The protein resides in the host nucleus. The enzyme catalyses a ribonucleoside 5'-triphosphate + H2O = a ribonucleoside 5'-diphosphate + phosphate + H(+). It catalyses the reaction Selective cleavage of Tyr-|-Gly bond in the picornavirus polyprotein.. The catalysed reaction is RNA(n) + a ribonucleoside 5'-triphosphate = RNA(n+1) + diphosphate. It carries out the reaction Selective cleavage of Gln-|-Gly bond in the poliovirus polyprotein. In other picornavirus reactions Glu may be substituted for Gln, and Ser or Thr for Gly.. With respect to regulation, replication or transcription is subject to high level of random mutations by the nucleotide analog ribavirin. In terms of biological role, forms an icosahedral capsid of pseudo T=3 symmetry with capsid proteins VP2 and VP3. The capsid is 300 Angstroms in diameter, composed of 60 copies of each capsid protein and enclosing the viral positive strand RNA genome. Capsid protein VP1 mainly forms the vertices of the capsid. Capsid protein VP1 interacts with host CXADR to provide virion attachment to target host cells. This attachment induces virion internalization. Tyrosine kinases are probably involved in the entry process. After binding to its receptor, the capsid undergoes conformational changes. Capsid protein VP1 N-terminus (that contains an amphipathic alpha-helix) and capsid protein VP4 are externalized. Together, they shape a pore in the host membrane through which viral genome is translocated to host cell cytoplasm. Its function is as follows. Forms an icosahedral capsid of pseudo T=3 symmetry with capsid proteins VP2 and VP3. The capsid is 300 Angstroms in diameter, composed of 60 copies of each capsid protein and enclosing the viral positive strand RNA genome. Lies on the inner surface of the capsid shell. After binding to the host receptor, the capsid undergoes conformational changes. Capsid protein VP4 is released, Capsid protein VP1 N-terminus is externalized, and together, they shape a pore in the host membrane through which the viral genome is translocated into the host cell cytoplasm. Functionally, component of immature procapsids, which is cleaved into capsid proteins VP4 and VP2 after maturation. Allows the capsid to remain inactive before the maturation step. In terms of biological role, cysteine protease that cleaves viral polyprotein and specific host proteins. It is responsible for the autocatalytic cleavage between the P1 and P2 regions, which is the first cleavage occurring in the polyprotein. Also cleaves the host translation initiation factor EIF4G1, in order to shut down the capped cellular mRNA translation. Inhibits the host nucleus-cytoplasm protein and RNA trafficking by cleaving host members of the nuclear pores. Counteracts stress granule formation probably by antagonizing its assembly or promoting its dissassembly. Cleaves and inhibits host IFIH1/MDA5, thereby inhibiting the type-I IFN production and the establishment of the antiviral state. Cleaves and inhibits host MAVS, thereby inhibiting the type-I IFN production and the establishment of the antiviral state. Its function is as follows. Plays an essential role in the virus replication cycle by acting as a viroporin. Creates a pore in the host endoplasmic reticulum and as a consequence releases Ca2+ in the cytoplasm of infected cell. In turn, high levels of cytoplasmic calcium may trigger membrane trafficking and transport of viral ER-associated proteins to viroplasms, sites of viral genome replication. Induces and associates with structural rearrangements of intracellular membranes. Displays RNA-binding, nucleotide binding and NTPase activities. May play a role in virion morphogenesis and viral RNA encapsidation by interacting with the capsid protein VP3. Functionally, localizes the viral replication complex to the surface of membranous vesicles. Together with protein 3CD binds the Cis-Active RNA Element (CRE) which is involved in RNA synthesis initiation. Acts as a cofactor to stimulate the activity of 3D polymerase, maybe through a nucleid acid chaperone activity. In terms of biological role, localizes the viral replication complex to the surface of membranous vesicles. It inhibits host cell endoplasmic reticulum-to-Golgi apparatus transport and causes the disassembly of the Golgi complex, possibly through GBF1 interaction. This would result in depletion of MHC, trail receptors and IFN receptors at the host cell surface. Plays an essential role in viral RNA replication by recruiting ACBD3 and PI4KB at the viral replication sites, thereby allowing the formation of the rearranged membranous structures where viral replication takes place. Its function is as follows. Acts as a primer for viral RNA replication and remains covalently bound to viral genomic RNA. VPg is uridylylated prior to priming replication into VPg-pUpU. The oriI viral genomic sequence may act as a template for this. The VPg-pUpU is then used as primer on the genomic RNA poly(A) by the RNA-dependent RNA polymerase to replicate the viral genome. During genome replication, the VPg-RNA linkage is removed by the host TDP2, thereby accelerating replication. During the late stage of the replication cycle, host TDP2 is excluded from sites of viral RNA synthesis and encapsidation, allowing for the generation of progeny virions. Involved in the viral replication complex and viral polypeptide maturation. It exhibits protease activity with a specificity and catalytic efficiency that is different from protease 3C. Protein 3CD lacks polymerase activity. Protein 3CD binds to the 5'UTR of the viral genome. Functionally, replicates the viral genomic RNA on the surface of intracellular membranes. May form linear arrays of subunits that propagate along a strong head-to-tail interaction called interface-I. Covalently attaches UMP to a tyrosine of VPg, which is used to prime RNA synthesis. The positive stranded RNA genome is first replicated at virus induced membranous vesicles, creating a dsRNA genomic replication form. This dsRNA is then used as template to synthesize positive stranded RNA genomes. ss(+)RNA genomes are either translated, replicated or encapsidated. In terms of biological role, major viral protease that mediates proteolytic processing of the polyprotein. Cleaves host EIF5B, contributing to host translation shutoff. Also cleaves host PABPC1, contributing to host translation shutoff. Cleaves host NLRP1, triggers host N-glycine-mediated degradation of the autoinhibitory NLRP1 N-terminal fragment. This is Genome polyprotein from Coxsackievirus B4 (strain JVB / Benschoten / New York/51).